The chain runs to 104 residues: Large ribosomal subunit protein bL21c (104 aa).

Belongs to the bacterial ribosomal protein bL21 family. As to quaternary structure, part of the 50S ribosomal subunit.

The protein resides in the plastid. It localises to the chloroplast. In terms of biological role, this protein binds to 23S rRNA. The polypeptide is Large ribosomal subunit protein bL21c (Pyropia yezoensis (Susabi-nori)).